Consider the following 405-residue polypeptide: MAAPGTVASVMASKTKTKKKHFVVQKVKLFRASDPLLSVLMWGVNHSINELSHVQIPVMLMPDDFKAYSKIKVDNHLFNKENMPSHFKFKEYCPMVFRNLRERFGIDDQDFQNSLTRSAPLANDSQARSGARFHTSYDKRYIIKTITSEDVAEMHNILKKYHQFIVECHGNTLLPQFLGMYRLTVDGVEIYMIVTRNVFSHRLSVYRKYDLKGSTVAREASDKEKAKELPTFKDNDFINDGQKIHIDENNKRMFLEKLKKDVEFLAQLKLMDYSLLVGIHDVERAEQEEVECEENDGEDEGESDGTHPIGTPPDSPGNTLNSSLPLAPGEFDPAIDVYGIKSHESAPRKEVYFMAIIDILTHYDAKKKAAHAAKTVKHGAGAEISTVNPEQYSKRFLDFIANILT.

The 373-residue stretch at 32 to 404 (ASDPLLSVLM…RFLDFIANIL (373 aa)) folds into the PIPK domain. Residues 287–326 (QEEVECEENDGEDEGESDGTHPIGTPPDSPGNTLNSSLPL) are disordered. Positions 288–303 (EEVECEENDGEDEGES) are enriched in acidic residues.

As to quaternary structure, homodimer. Post-translationally, phosphorylated in tyrosines. Phosphorylation is induced by light and increases kinase activity.

It is found in the cell membrane. The protein resides in the nucleus. The protein localises to the lysosome. It localises to the cytoplasm. It carries out the reaction a 1,2-diacyl-sn-glycero-3-phospho-(1D-myo-inositol-5-phosphate) + ATP = a 1,2-diacyl-sn-glycero-3-phospho-(1D-myo-inositol-4,5-bisphosphate) + ADP + H(+). It catalyses the reaction 1,2-dihexadecanoyl-sn-glycero-3-phospho-(1D-myo-inositol-5-phosphate) + ATP = 1,2-dihexadecanoyl-sn-glycero-3-phospho-(1D-myo-inositol-4,5-bisphosphate) + ADP + H(+). The catalysed reaction is 1,2-dihexadecanoyl-sn-glycero-3-phospho-(1D-myo-inositol-5-phosphate) + GTP = 1,2-dihexadecanoyl-sn-glycero-3-phospho-(1D-myo-inositol-4,5-bisphosphate) + GDP + H(+). With respect to regulation, in rod outer segments, activated by light. Functionally, catalyzes the phosphorylation of phosphatidylinositol 5-phosphate (PtdIns5P) on the fourth hydroxyl of the myo-inositol ring, to form phosphatidylinositol 4,5-bisphosphate (PtdIns(4,5)P2). Has both ATP- and GTP-dependent kinase activities. The chain is Phosphatidylinositol 5-phosphate 4-kinase type-2 alpha (PIP4K2A) from Gallus gallus (Chicken).